Here is a 419-residue protein sequence, read N- to C-terminus: eIF5-mimic protein 2-A (419 aa).

Over residues Met1 to Arg15 the composition is skewed to polar residues. The interval Met1–Pro29 is disordered. In terms of domain architecture, W2 spans Asn247–Glu414.

Belongs to the BZW family.

In terms of biological role, translation initiation regulator which may repress repeat-associated non-AUG (RAN) initiated translation probably by acting as a competitive inhibitor of eukaryotic translation initiation factor 5 (EIF5) function. Enhances histone H4 gene transcription but does not seem to bind DNA directly. The polypeptide is eIF5-mimic protein 2-A (bzw1a) (Danio rerio (Zebrafish)).